A 540-amino-acid chain; its full sequence is MSSEVKSFSKFRGYFFPIYRSEFSKFIPLFFLAFFVGVNYALLKTTKDSLVLVGSRAGAEVIPFLKVWGIVPGAVIVTMIYGWMSRRYSRGTVFISLVGGFLGFFALFATVIYPIGDALHLNKLAAKLQSILPPGGRGFVVMVQYWSYSLYYVMSELWSSIVLSTLFWGVANHITSVREAGRFYALINTGLNLSSVFAGEVSLWLGRNPVIAFPMAVDPWHEVLLNITLLIVLAGGVILYLYQKLDRLMDETSMLKEGLAAEMSVAQLKKEKKRSKAKAKSLFALLLRSRYLLGIAVVVLSYNLVIHLFEVVWKDQVCRIYASRVEFNSYMSRITTLTGIVSALTGIFAAGQTIRRWGWTIGALVPPLTMLITGALFFGAIYAVKGDAMIFGGILGISPLVLTAWLGGVQNVFSRAIKFTYFDQTKEMAFIPLEDDEKNYGKAAIDGVISRVGKSGGSLVYQGLLIIFSSVAASLNAITIVLLLALGSWIFVIAWLGREYTAKTEALFRVNVSEEDVLQEEREASSLVDAESREEPVTTL.

12 helical membrane-spanning segments follow: residues 23–43 (FSKFIPLFFLAFFVGVNYALL), 61–81 (VIPFLKVWGIVPGAVIVTMIY), 93–113 (VFISLVGGFLGFFALFATVIY), 150–170 (LYYVMSELWSSIVLSTLFWGV), 185–205 (ALINTGLNLSSVFAGEVSLWL), 222–242 (EVLLNITLLIVLAGGVILYLY), 292–312 (LLGIAVVVLSYNLVIHLFEVV), 334–354 (ITTLTGIVSALTGIFAAGQTI), 361–381 (IGALVPPLTMLITGALFFGAI), 389–409 (MIFGGILGISPLVLTAWLGGV), 455–475 (SGGSLVYQGLLIIFSSVAASL), and 477–497 (AITIVLLLALGSWIFVIAWLG).

It belongs to the ADP/ATP translocase tlc family.

The protein resides in the cell membrane. The sequence is that of ADP,ATP carrier protein 2 (tlcB) from Chlamydia trachomatis serovar D (strain ATCC VR-885 / DSM 19411 / UW-3/Cx).